A 422-amino-acid polypeptide reads, in one-letter code: Inner membrane ALBINO3-like protein 2, chloroplastic (422 aa).

The span at 1-10 shows a compositional bias: polar residues; sequence MALQMKQSPS. Positions 1-22 are disordered; the sequence is MALQMKQSPSMGVRRASQPVLP. A helical transmembrane segment spans residues 65 to 85; it reads LYTLAEGGPIDVLAQFFEFVL. Residues 86–96 lie on the Stromal side of the membrane; it reads QTLDEGLESAK. A helical membrane pass occupies residues 97–117; sequence IPYSYGFAIIALTVLVKVATF. Residues 118 to 166 are Lumenal-facing; that stretch reads PLTQKQVESTLSLQALQPRVKELQAKYADDPENLQLETARLYKEAGVNP. Residues 167-187 form a helical membrane-spanning segment; sequence LAGCFPTLATIPVFIGLYNAL. At 188-225 the chain is on the stromal side; the sequence is SNAAKEGLLTEGFFWIPSLGGPTTIGGGLEWLVPFENG. A helical membrane pass occupies residues 226 to 246; that stretch reads APPVGWANAAAYLVMPVLLVA. The Lumenal portion of the chain corresponds to 247 to 275; sequence SQYASQKIISSQNNQDPSQQQAQAILKFL. The helical transmembrane segment at 276 to 296 threads the bilayer; it reads PLMIGWFSLNVPSGLTLYWFV. Residues 297 to 422 are Stromal-facing; the sequence is NNLLSTGQQL…GSEEGKDNSA (126 aa). Residues 325-422 form a disordered region; the sequence is TAGSSTPIVK…GSEEGKDNSA (98 aa). A compositionally biased stretch (basic and acidic residues) spans 334–350; that stretch reads KPKEERVKKVTGKELGS. The span at 358–367 shows a compositional bias: acidic residues; it reads DGEEVEDVEV. Residues 368 to 380 show a composition bias toward low complexity; that stretch reads EVVSSGSSSSSGS. A compositionally biased stretch (basic and acidic residues) spans 386-400; it reads RKGEKFRALKAREAA.

This sequence belongs to the OXA1/ALB3/YidC (TC 2.A.9.2) family.

Its subcellular location is the plastid. The protein localises to the chloroplast thylakoid membrane. In terms of biological role, required for the insertion of some light-harvesting complexes (LHC) proteins into the chloroplast thylakoid membrane. Essential for the assembly and activity of LHC I and II. Its function is probably partly distinct from that of ALB3.1. In Chlamydomonas reinhardtii (Chlamydomonas smithii), this protein is Inner membrane ALBINO3-like protein 2, chloroplastic (ALB3.2).